The chain runs to 181 residues: Adenylate kinase (181 aa).

Gly7–Thr15 serves as a coordination point for ATP.

The protein belongs to the archaeal adenylate kinase family.

The protein localises to the cytoplasm. The enzyme catalyses AMP + ATP = 2 ADP. The sequence is that of Adenylate kinase (adkA) from Thermoplasma volcanium (strain ATCC 51530 / DSM 4299 / JCM 9571 / NBRC 15438 / GSS1).